An 87-amino-acid chain; its full sequence is Small ribosomal subunit protein bS20 (87 aa).

Basic residues predominate over residues 1 to 10 (MANIKSKQKR). The segment at 1-27 (MANIKSKQKRILTNEKSRQRNKSVRSA) is disordered.

It belongs to the bacterial ribosomal protein bS20 family.

Its function is as follows. Binds directly to 16S ribosomal RNA. The sequence is that of Small ribosomal subunit protein bS20 from Corynebacterium aurimucosum (strain ATCC 700975 / DSM 44827 / CIP 107346 / CN-1) (Corynebacterium nigricans).